Consider the following 344-residue polypeptide: D-beta-hydroxybutyrate dehydrogenase, mitochondrial (344 aa).

A mitochondrion-targeting transit peptide spans 1 to 46 (MLTARLSRPLSQLPRKTLNFSDRENGTRGSLLLYSAPFVPVGRRTY). 59-83 (LITGCDSGFGFSLAKHLHSEGFLVF) serves as a coordination point for NAD(+). Residues Lys-73 and Lys-97 each carry the N6-acetyllysine modification. Residue Lys-103 is modified to N6-acetyllysine; alternate. Lys-103 is modified (N6-succinyllysine; alternate). An N6-acetyllysine modification is found at Lys-177. Residue Ser-195 participates in substrate binding. The Proton acceptor role is filled by Tyr-208. Lys-212 carries the post-translational modification N6-acetyllysine. Ser-219 is a glycosylation site (O-linked (GlcNAc) serine). Ser-246 bears the Phosphoserine mark. Lys-260 carries the N6-acetyllysine; alternate modification. Lys-260 is subject to N6-succinyllysine; alternate. At Lys-281 the chain carries N6-acetyllysine.

It belongs to the short-chain dehydrogenases/reductases (SDR) family. As to quaternary structure, homotetramer.

Its subcellular location is the mitochondrion inner membrane. It is found in the mitochondrion matrix. The enzyme catalyses (R)-3-hydroxybutanoate + NAD(+) = acetoacetate + NADH + H(+). Requires phosphatidylcholine as an allosteric activator for enzymatic activity. This Bos taurus (Bovine) protein is D-beta-hydroxybutyrate dehydrogenase, mitochondrial.